Reading from the N-terminus, the 350-residue chain is Uroporphyrinogen decarboxylase (350 aa).

Substrate is bound by residues 28–32 (RQAGR), D78, Y154, T209, and H325.

This sequence belongs to the uroporphyrinogen decarboxylase family. As to quaternary structure, homodimer.

The protein resides in the cytoplasm. The catalysed reaction is uroporphyrinogen III + 4 H(+) = coproporphyrinogen III + 4 CO2. It participates in porphyrin-containing compound metabolism; protoporphyrin-IX biosynthesis; coproporphyrinogen-III from 5-aminolevulinate: step 4/4. In terms of biological role, catalyzes the decarboxylation of four acetate groups of uroporphyrinogen-III to yield coproporphyrinogen-III. The protein is Uroporphyrinogen decarboxylase of Nitrobacter hamburgensis (strain DSM 10229 / NCIMB 13809 / X14).